The sequence spans 1082 residues: Mediator of RNA polymerase II transcription subunit 14 (1082 aa).

Disordered regions lie at residues 1–80 (MTTT…APPP) and 319–343 (EATSTNGDSENNEENSSSNGNNLPL). Thr-2 bears the N-acetylthreonine mark. Position 7 is a phosphoserine (Ser-7). The segment covering 13 to 28 (NEERLSNEMHALKNRS) has biased composition (basic and acidic residues). Polar residues predominate over residues 29–59 (EQNGQEQQGPVKNTQLHGPSATDPETTATQK). The segment covering 321 to 340 (TSTNGDSENNEENSSSNGNN) has biased composition (low complexity). Thr-1036 is modified (phosphothreonine).

It belongs to the Mediator complex subunit 14 family. Component of the Mediator complex, which is composed of at least 21 subunits that form three structurally distinct submodules. The Mediator head module contains MED6, MED8, MED11, SRB4/MED17, SRB5/MED18, ROX3/MED19, SRB2/MED20 and SRB6/MED22, the middle module contains MED1, MED4, NUT1/MED5, MED7, CSE2/MED9, NUT2/MED10, SRB7/MED21 and SOH1/MED31, and the tail module contains MED2, PGD1/MED3, RGR1/MED14, GAL11/MED15 and SIN4/MED16. The head and the middle modules interact directly with RNA polymerase II, whereas the elongated tail module interacts with gene-specific regulatory proteins.

The protein resides in the nucleus. Functionally, component of the Mediator complex, a coactivator involved in the regulated transcription of nearly all RNA polymerase II-dependent genes. Mediator functions as a bridge to convey information from gene-specific regulatory proteins to the basal RNA polymerase II transcription machinery. The Mediator complex, having a compact conformation in its free form, is recruited to promoters by direct interactions with regulatory proteins and serves for the assembly of a functional preinitiation complex with RNA polymerase II and the general transcription factors. The Mediator complex unfolds to an extended conformation and partially surrounds RNA polymerase II, specifically interacting with the unphosphorylated form of the C-terminal domain (CTD) of RNA polymerase II. The Mediator complex dissociates from the RNA polymerase II holoenzyme and stays at the promoter when transcriptional elongation begins. This Saccharomyces cerevisiae (strain ATCC 204508 / S288c) (Baker's yeast) protein is Mediator of RNA polymerase II transcription subunit 14 (RGR1).